The following is a 356-amino-acid chain: Zinc finger protein 830 (356 aa).

Positions alanine 11–glutamate 33 form a coiled coil. The C2H2-type zinc finger occupies cysteine 47–histidine 69. The segment at glutamate 71–alanine 195 is disordered. Residues lysine 80–isoleucine 90 show a composition bias toward polar residues. Basic and acidic residues-rich tracts occupy residues lysine 99–proline 118 and leucine 125–threonine 135. Acidic residues predominate over residues aspartate 150 to tyrosine 165. A coiled-coil region spans residues alanine 278–lysine 322.

Its subcellular location is the nucleus. The protein resides in the chromosome. It is found in the nucleus speckle. Functionally, may act as an important regulator of the cell cycle that participates in the maintenance of genome integrity. The chain is Zinc finger protein 830 from Xenopus laevis (African clawed frog).